The sequence spans 394 residues: uncharacterized protein (394 aa).

8 helical membrane-spanning segments follow: residues 22 to 42 (VLVSLFGVSLLLLCLAGVLLH), 60 to 80 (LALFDLHGLIGIWGLPWLLLF), 81 to 101 (GFTGALSGLGALGTLLLAPVA), 231 to 251 (LHLAMGLGACLLCASGLYLWL), 271 to 291 (GFCAGLVAAAALLLLGLQLAP), 303 to 323 (LFLVLWAAAGLAALLLPGDWP), 328 to 348 (LLGVAGLACLAAAVAHLAPWL), and 355 to 375 (ALGPDLTLILCGALLIRHAWM).

It localises to the cell membrane. This is an uncharacterized protein from Pseudomonas aeruginosa (strain ATCC 15692 / DSM 22644 / CIP 104116 / JCM 14847 / LMG 12228 / 1C / PRS 101 / PAO1).